The following is a 965-amino-acid chain: Villin-3 (965 aa).

6 Gelsolin-like repeats span residues 27–79 (ENFE…DEAG), 150–190 (VHLK…QERA), 262–304 (GQVE…EERK), 401–452 (ANSK…EDQE), 533–573 (NKAL…EQQE), and 635–676 (FQVE…KEKQ). Low complexity-rich tracts occupy residues 769–780 (AFNSSSGRTSSP) and 808–828 (SSPS…ASQR). Disordered regions lie at residues 769 to 828 (AFNS…ASQR) and 840 to 906 (TAEK…GVTF). Positions 865–879 (EATEEATEAKEEEEV) are enriched in acidic residues. Ser-880 carries the post-translational modification Phosphoserine. Positions 900 to 965 (ETTGVTFTYE…DLLKKKFNLF (66 aa)) constitute an HP domain.

It belongs to the villin/gelsolin family. As to expression, expressed in all tissues examined, including root hairs.

It localises to the cytoplasm. The protein resides in the cytoskeleton. Binds actin and actin filament bundles in a Ca(2+)-insensitive manner, but severs actin filaments in a calcium-dependent manner, regardless of the presence or not of VLN1 (AC O81643). Acts redundantly with VLN2 (AC O81644) to generate thick actin filament bundles, to regulate directional organ growth and in sclerenchyma development. The chain is Villin-3 from Arabidopsis thaliana (Mouse-ear cress).